The chain runs to 420 residues: Imidazolonepropionase (420 aa).

2 residues coordinate Fe(3+): histidine 77 and histidine 79. 2 residues coordinate Zn(2+): histidine 77 and histidine 79. 4-imidazolone-5-propanoate-binding residues include arginine 86, tyrosine 149, and histidine 182. An N-formimidoyl-L-glutamate-binding site is contributed by tyrosine 149. Residue histidine 245 participates in Fe(3+) binding. Zn(2+) is bound at residue histidine 245. Glutamate 248 contacts 4-imidazolone-5-propanoate. Aspartate 319 contributes to the Fe(3+) binding site. Aspartate 319 is a binding site for Zn(2+). Asparagine 321 contributes to the N-formimidoyl-L-glutamate binding site.

It belongs to the metallo-dependent hydrolases superfamily. HutI family. Requires Zn(2+) as cofactor. Fe(3+) is required as a cofactor.

Its subcellular location is the cytoplasm. It catalyses the reaction 4-imidazolone-5-propanoate + H2O = N-formimidoyl-L-glutamate. The protein operates within amino-acid degradation; L-histidine degradation into L-glutamate; N-formimidoyl-L-glutamate from L-histidine: step 3/3. Functionally, catalyzes the hydrolytic cleavage of the carbon-nitrogen bond in imidazolone-5-propanoate to yield N-formimidoyl-L-glutamate. It is the third step in the universal histidine degradation pathway. The protein is Imidazolonepropionase of Haloarcula marismortui (strain ATCC 43049 / DSM 3752 / JCM 8966 / VKM B-1809) (Halobacterium marismortui).